Consider the following 445-residue polypeptide: Protein EMP47 (445 aa).

A signal peptide spans M1–A28. Over H29 to R412 the chain is Lumenal. Residues D36–G254 enclose the L-type lectin-like domain. Residues C179 and C213 are joined by a disulfide bond. The helical transmembrane segment at K413–F433 threads the bilayer. Residues Y430–F433 are mediates the interactions with COPI and COPII coat complexes. At R434–L445 the chain is on the cytoplasmic side. The Di-lysine motif signature appears at K441–L445.

The protein belongs to the EMP46/EMP47 family. As to quaternary structure, homooligomers. Interacts with EMP46 in the endoplasmic reticulum membrane. Interacts with the coatomer proteins COP1, SEC21 and SEC23.

The protein resides in the golgi apparatus membrane. It is found in the endoplasmic reticulum membrane. In terms of biological role, involved in the secretion of glycoproteins and in nucleus architecture and gene silencing. Required for the endoplasmic reticulum exit of EMP46. The protein is Protein EMP47 (EMP47) of Saccharomyces cerevisiae (strain ATCC 204508 / S288c) (Baker's yeast).